The chain runs to 345 residues: Protein Tob1 (345 aa).

The Bipartite nuclear localization signal signature appears at 22–39 (RRRVNIFGEELERLLKKK). Positions 82–92 (VRGNLPQDLSV) are important for nuclear localization. Positions 144–160 (DPASSVSSSPSPPFGHS) are enriched in low complexity. Residues 144–171 (DPASSVSSSPSPPFGHSAAVSPTFMPRS) are disordered. Positions 161–218 (AAVSPTFMPRSTQPLTFTTATFAATKFGSTKMKNSGRSNKVARTSPINLGLNVNDLLK) are required for interaction with CPEB3. A Phosphothreonine modification is found at T204. Positions 226 to 234 (MHSLYGLGL) match the Nuclear export signal motif. Residues 231–267 (GLGLGSQQQPQQQQQPAQPPPPPPPPQQQQQQKTSAL) form a disordered region. A compositionally biased stretch (low complexity) spans 237-246 (QQQPQQQQQP). The span at 247–257 (AQPPPPPPPPQ) shows a compositional bias: pro residues.

This sequence belongs to the BTG family. Interacts with ERBB2. Interacts with CNOT7. Interacts with CPEB3 (via C-terminal RNA-binding region); recruits CNOT7 to CPEB3 to form a ternary complex required for mRNA deadenylation and decay. Interacts with CNOT8. Interacts with CPEB4. In terms of processing, phosphorylated on Ser and Thr residues. In terms of tissue distribution, ubiquitous.

The protein resides in the cytoplasm. The protein localises to the nucleus. Functionally, anti-proliferative protein; the function is mediated by association with deadenylase subunits of the CCR4-NOT complex. Mediates CPEB3-accelerated mRNA deadenylation by binding to CPEB3 and recruiting CNOT7 which leads to target mRNA deadenylation and decay. The polypeptide is Protein Tob1 (TOB1) (Homo sapiens (Human)).